The following is a 271-amino-acid chain: OX-2 membrane glycoprotein homolog (271 aa).

The signal sequence occupies residues 1–24 (MSSLFISLPWVAFIWLALLGAVGG). The Extracellular portion of the chain corresponds to 25–227 (ARVQGPMRGS…QGPLAHDLPA (203 aa)). The region spanning 26 to 129 (RVQGPMRGSA…SCTACLEVTS (104 aa)) is the Ig-like V-type domain. C39 and C109 form a disulfide bridge. N-linked (GlcNAc...) asparagine; by host glycans are attached at residues N83, N91, N138, N157, N166, and N208. The Ig-like C2-type domain maps to 130–220 (PPTGHVQVNS…ISIPASIQGP (91 aa)). Cysteines 148 and 202 form a disulfide. The chain crosses the membrane as a helical span at residues 228–248 (AQGTLAGVAITLVGLFGIFAL). Residues 249–271 (HHCRRKQGGASPTSDDMDPLSTQ) are Cytoplasmic-facing.

Interacts with human CD200R1. In terms of processing, N-glycosylated.

The protein localises to the host cell membrane. Dramatically stimulates primary monocytes, macrophages, and dendritic cells to produce the inflammatory cytokines interleukin 1-beta, IL-6, monocyte chemoattractant protein 1, and TNF-alpha. The induction of inflammatory cytokine production potentially promotes the cytokine-mediated angiogenic proliferation of KSHV-infected cells. The chain is OX-2 membrane glycoprotein homolog (K14) from Human herpesvirus 8 type P (isolate GK18) (HHV-8).